The following is a 119-amino-acid chain: Beta-2-microglobulin (119 aa).

An N-terminal signal peptide occupies residues 1-21 (MGKAAAVVLVTLVALLGLAQA). Positions 25–113 (PKVQVYSRFP…HETLKEPQVY (89 aa)) constitute an Ig-like C1-type domain. A disulfide bond links Cys45 and Cys100.

The protein belongs to the beta-2-microglobulin family. Heterodimer of an alpha chain and a beta chain. Beta-2-microglobulin is the beta-chain of major histocompatibility complex class I molecules.

Its subcellular location is the secreted. In terms of biological role, component of the class I major histocompatibility complex (MHC). Involved in the presentation of peptide antigens to the immune system. The sequence is that of Beta-2-microglobulin (B2M) from Gallus gallus (Chicken).